Reading from the N-terminus, the 77-residue chain is Conotoxin ArMKLT2-0251 (77 aa).

The signal sequence occupies residues 1–22 (MKLTCVLIVAVLILTACQLIAA). A propeptide spanning residues 23–46 (DDSRDLKRFSRRKMRDGMLNTKNM) is cleaved from the precursor. Gln49 is modified (pyrrolidone carboxylic acid). 3 disulfides stabilise this stretch: Cys50–Cys65, Cys57–Cys68, and Cys64–Cys73.

This sequence belongs to the conotoxin O1 superfamily. As to expression, expressed by the venom duct.

The protein resides in the secreted. This is Conotoxin ArMKLT2-0251 from Conus arenatus (Sand-dusted cone).